Reading from the N-terminus, the 208-residue chain is Large ribosomal subunit protein uL3 (208 aa).

The interval 123–147 is disordered; that stretch reads RHGQSRGPMAHGSRYHRRPGSMGPV.

The protein belongs to the universal ribosomal protein uL3 family. In terms of assembly, part of the 50S ribosomal subunit. Forms a cluster with proteins L14 and L19.

Its function is as follows. One of the primary rRNA binding proteins, it binds directly near the 3'-end of the 23S rRNA, where it nucleates assembly of the 50S subunit. This Streptococcus sanguinis (strain SK36) protein is Large ribosomal subunit protein uL3.